The chain runs to 361 residues: tRNA N6-adenosine threonylcarbamoyltransferase (361 aa).

Residues H110 and H114 each coordinate Fe cation. Residues 132–136 (LVSGG), D165, G178, D182, and N289 contribute to the substrate site. Fe cation is bound at residue D317.

This sequence belongs to the KAE1 / TsaD family. It depends on Fe(2+) as a cofactor.

Its subcellular location is the cytoplasm. The enzyme catalyses L-threonylcarbamoyladenylate + adenosine(37) in tRNA = N(6)-L-threonylcarbamoyladenosine(37) in tRNA + AMP + H(+). In terms of biological role, required for the formation of a threonylcarbamoyl group on adenosine at position 37 (t(6)A37) in tRNAs that read codons beginning with adenine. Is involved in the transfer of the threonylcarbamoyl moiety of threonylcarbamoyl-AMP (TC-AMP) to the N6 group of A37, together with TsaE and TsaB. TsaD likely plays a direct catalytic role in this reaction. The sequence is that of tRNA N6-adenosine threonylcarbamoyltransferase from Nitratidesulfovibrio vulgaris (strain ATCC 29579 / DSM 644 / CCUG 34227 / NCIMB 8303 / VKM B-1760 / Hildenborough) (Desulfovibrio vulgaris).